Reading from the N-terminus, the 341-residue chain is Protein phosphatase methylesterase 1 (341 aa).

The segment at 1-24 (MAFRKEELSQTLYENESEQSSETK) is disordered. The segment covering 9–20 (SQTLYENESEQS) has biased composition (polar residues). Active-site residues include S153, D178, and H304.

Belongs to the AB hydrolase superfamily.

The catalysed reaction is [phosphatase 2A protein]-C-terminal L-leucine methyl ester + H2O = [phosphatase 2A protein]-C-terminal L-leucine + methanol + H(+). Functionally, demethylates proteins that have been reversibly carboxymethylated. Demethylates the phosphatase PP2A catalytic subunit. In Schizosaccharomyces pombe (strain 972 / ATCC 24843) (Fission yeast), this protein is Protein phosphatase methylesterase 1 (ppe1).